The primary structure comprises 569 residues: Mitogen-activated protein kinase 8 (569 aa).

The Protein kinase domain occupies 13 to 304 (YKIQEVIGKG…AEEALADPYF (292 aa)). Residues 19–27 (IGKGSYGVV) and lysine 42 contribute to the ATP site. Aspartate 139 acts as the Proton acceptor in catalysis. The residue at position 175 (threonine 175) is a Phosphothreonine. The short motif at 175 to 177 (TDY) is the TXY element. Phosphotyrosine is present on tyrosine 177. The tract at residues 404–432 (TTVHSAPIPPKDHQNITSQVPQRIPGRTG) is disordered.

The protein belongs to the protein kinase superfamily. CMGC Ser/Thr protein kinase family. MAP kinase subfamily. Post-translationally, dually phosphorylated on Thr-175 and Tyr-177, which activates the enzyme. Expressed in leaves and panicles.

It catalyses the reaction L-seryl-[protein] + ATP = O-phospho-L-seryl-[protein] + ADP + H(+). The enzyme catalyses L-threonyl-[protein] + ATP = O-phospho-L-threonyl-[protein] + ADP + H(+). With respect to regulation, activated by threonine and tyrosine phosphorylation. The sequence is that of Mitogen-activated protein kinase 8 (MPK8) from Oryza sativa subsp. japonica (Rice).